The primary structure comprises 231 residues: Orotidine 5'-phosphate decarboxylase (231 aa).

Substrate is bound by residues aspartate 9, lysine 34, aspartate 62–valine 71, threonine 117, arginine 179, glutamine 188, glycine 208, and arginine 209. Residue lysine 64 is the Proton donor of the active site.

It belongs to the OMP decarboxylase family. Type 1 subfamily. Homodimer.

It catalyses the reaction orotidine 5'-phosphate + H(+) = UMP + CO2. The protein operates within pyrimidine metabolism; UMP biosynthesis via de novo pathway; UMP from orotate: step 2/2. Functionally, catalyzes the decarboxylation of orotidine 5'-monophosphate (OMP) to uridine 5'-monophosphate (UMP). This Aquifex aeolicus (strain VF5) protein is Orotidine 5'-phosphate decarboxylase.